Here is a 448-residue protein sequence, read N- to C-terminus: Homogentisate 1,2-dioxygenase (448 aa).

H303 (proton acceptor) is an active-site residue. H346 and E352 together coordinate Fe cation. Positions 361 and 382 each coordinate homogentisate. Residue H382 participates in Fe cation binding.

The protein belongs to the homogentisate dioxygenase family. Hexamer; dimer of trimers. Fe cation is required as a cofactor.

The catalysed reaction is homogentisate + O2 = 4-maleylacetoacetate + H(+). The protein operates within amino-acid degradation; L-phenylalanine degradation; acetoacetate and fumarate from L-phenylalanine: step 4/6. Functionally, involved in the catabolism of homogentisate (2,5-dihydroxyphenylacetate or 2,5-OH-PhAc), a central intermediate in the degradation of phenylalanine and tyrosine. Catalyzes the oxidative ring cleavage of the aromatic ring of homogentisate to yield maleylacetoacetate. The protein is Homogentisate 1,2-dioxygenase of Rhodopseudomonas palustris (strain BisB5).